Reading from the N-terminus, the 98-residue chain is Cystatin-B (98 aa).

Met1 bears the N-acetylmethionine mark. Residues 46–50 (QVVAG) carry the Secondary area of contact motif.

Belongs to the cystatin family.

The protein resides in the cytoplasm. In terms of biological role, this is an intracellular thiol proteinase inhibitor. The chain is Cystatin-B (CSTB) from Sus scrofa (Pig).